The sequence spans 144 residues: Small ribosomal subunit protein eS12z (144 aa).

The residue at position 2 (Ser2) is an N-acetylserine.

Belongs to the eukaryotic ribosomal protein eS12 family.

The polypeptide is Small ribosomal subunit protein eS12z (RPS12A) (Arabidopsis thaliana (Mouse-ear cress)).